A 369-amino-acid chain; its full sequence is MHENFDKRLELLLEGLALTRRSLFDPEGKENELKELEQQAVQDGFWDDVVRAGKISERIARLKQQLSEFNELKNKVSAIQFFLEDEESSKDLEMQKELEKEFVFCEKKITEWETLRLLSGELDRNSCFLSINAGAGGTESCDWVEMLLRMYMRWASSHSWRIEVIDRLDGEVAGIKHITLKLVGEYAYGYAKAESGVHRLVRISPFDSNAKRHTSFASVEVFPEIDDKIEVEIRPGDIRIDTYRSSGAGGQHVNVTDSAVRITHFPTGIVVSCQNERSQIQNREACMNMLRARIYQKLLQERLEKQNIDRKNKKEISWGSQIRNYVFQPYTLVKDVRTGYEVGNIQAMMDGELLDAFIKAYLVDYGEIT.

Q251 carries the post-translational modification N5-methylglutamine.

It belongs to the prokaryotic/mitochondrial release factor family. Post-translationally, methylated by PrmC. Methylation increases the termination efficiency of RF2.

It is found in the cytoplasm. Its function is as follows. Peptide chain release factor 2 directs the termination of translation in response to the peptide chain termination codons UGA and UAA. This Chlamydia trachomatis serovar A (strain ATCC VR-571B / DSM 19440 / HAR-13) protein is Peptide chain release factor 2.